A 31-amino-acid polypeptide reads, in one-letter code: Photosystem II reaction center protein T (31 aa).

A helical membrane pass occupies residues 3 to 23 (SFAYILILAFSIGTLFFAIAL).

Belongs to the PsbT family. As to quaternary structure, PSII is composed of 1 copy each of membrane proteins PsbA, PsbB, PsbC, PsbD, PsbE, PsbF, PsbH, PsbI, PsbJ, PsbK, PsbL, PsbM, PsbT, PsbX, PsbY, PsbZ, Psb30/Ycf12, peripheral proteins PsbO, CyanoQ (PsbQ), PsbU, PsbV and a large number of cofactors. It forms dimeric complexes.

The protein localises to the cellular thylakoid membrane. Functionally, found at the monomer-monomer interface of the photosystem II (PS II) dimer, plays a role in assembly and dimerization of PSII. PSII is a light-driven water plastoquinone oxidoreductase, using light energy to abstract electrons from H(2)O, generating a proton gradient subsequently used for ATP formation. This Synechococcus sp. (strain RCC307) protein is Photosystem II reaction center protein T.